The chain runs to 571 residues: Acetolactate synthase large subunit (571 aa).

Glu51 is a thiamine diphosphate binding site. FAD is bound by residues Arg153, 261–282 (HGTYEANMAMHYSDVIFAIGVR), and 304–323 (DIDPTSISKTVSADIPIVGD). The thiamine pyrophosphate binding stretch occupies residues 394–474 (QHQMFTALYY…VLILNLNNSS (81 aa)). Mg(2+) contacts are provided by Asp445 and Asn472.

This sequence belongs to the TPP enzyme family. Dimer of large and small chains. Mg(2+) serves as cofactor. It depends on thiamine diphosphate as a cofactor.

It carries out the reaction 2 pyruvate + H(+) = (2S)-2-acetolactate + CO2. It functions in the pathway amino-acid biosynthesis; L-isoleucine biosynthesis; L-isoleucine from 2-oxobutanoate: step 1/4. Its pathway is amino-acid biosynthesis; L-valine biosynthesis; L-valine from pyruvate: step 1/4. The sequence is that of Acetolactate synthase large subunit (ilvI) from Buchnera aphidicola subsp. Schizaphis graminum (strain Sg).